The chain runs to 1270 residues: Nuclear exosome regulator NRDE2 (1270 aa).

Disordered regions lie at residues 1 to 22 (MFRA…ENPD) and 119 to 209 (SVKS…HTLM). Residues 119–135 (SVKSLNGCQDPPETSQQ) are compositionally biased toward polar residues. Basic residues predominate over residues 164–184 (QRSRSREKKRRKKERRRKRSS). A compositionally biased stretch (basic and acidic residues) spans 192–204 (RSRDRSSRARDTS).

Belongs to the NRDE2 family. In terms of assembly, interacts with nrde-3.

The protein localises to the nucleus. The protein resides in the nucleus speckle. Its subcellular location is the nucleolus. Protein of the nuclear speckles that regulates RNA exosomal degradation. Involved in short interfering RNAs-mediated silencing in nuclei. Functions with nrde-3 in the nuclear RNA-mediated gene silencing (RNAi) pathway to regulate gene expression via inhibition of RNA polymerases I and II during the elongation phase of transcription. Required for exogenous RNAi-induced H3K27 methylation. This chain is Nuclear exosome regulator NRDE2 (nrde-2), found in Caenorhabditis elegans.